The sequence spans 156 residues: Endoribonuclease YbeY (156 aa).

Zn(2+) is bound by residues His-117, His-121, and His-127.

This sequence belongs to the endoribonuclease YbeY family. Zn(2+) serves as cofactor.

The protein resides in the cytoplasm. Functionally, single strand-specific metallo-endoribonuclease involved in late-stage 70S ribosome quality control and in maturation of the 3' terminus of the 16S rRNA. The protein is Endoribonuclease YbeY of Shewanella frigidimarina (strain NCIMB 400).